A 238-amino-acid chain; its full sequence is Thiamine import ATP-binding protein ThiQ (238 aa).

The ABC transporter domain maps to 2–230 (LALDKVRYEY…HPHPELAQFV (229 aa)). Residue 32-39 (GPSGAGKS) participates in ATP binding.

This sequence belongs to the ABC transporter superfamily. Thiamine importer (TC 3.A.1.19.1) family. In terms of assembly, the complex is composed of two ATP-binding proteins (ThiQ), two transmembrane proteins (ThiP) and a solute-binding protein (ThiB).

The protein resides in the cell inner membrane. It carries out the reaction thiamine(out) + ATP + H2O = thiamine(in) + ADP + phosphate + H(+). Functionally, part of the ABC transporter complex ThiBPQ involved in thiamine import. Responsible for energy coupling to the transport system. This Vibrio cholerae serotype O1 (strain ATCC 39315 / El Tor Inaba N16961) protein is Thiamine import ATP-binding protein ThiQ.